The following is a 311-amino-acid chain: Chalcone synthase 4 (311 aa).

Residue Cys-164 is part of the active site.

This sequence belongs to the thiolase-like superfamily. Chalcone/stilbene synthases family.

It catalyses the reaction (E)-4-coumaroyl-CoA + 3 malonyl-CoA + 3 H(+) = 2',4,4',6'-tetrahydroxychalcone + 3 CO2 + 4 CoA. The protein operates within secondary metabolite biosynthesis; flavonoid biosynthesis. Functionally, the primary product of this enzyme is 4,2',4',6'-tetrahydroxychalcone (also termed naringenin-chalcone or chalcone) which can under specific conditions spontaneously isomerize into naringenin. The chain is Chalcone synthase 4 (CHS4) from Trifolium subterraneum (Subterranean clover).